Consider the following 357-residue polypeptide: DNA integrity scanning protein DisA (357 aa).

A DAC domain is found at 8–146; the sequence is VKSMINILQL…GNLRYTLKDI (139 aa). ATP-binding positions include Gly-75, Leu-93, and 106–110; that span reads MRHRT.

This sequence belongs to the DisA family. In terms of assembly, homooctamer. The cofactor is Mg(2+).

It carries out the reaction 2 ATP = 3',3'-c-di-AMP + 2 diphosphate. Functionally, participates in a DNA-damage check-point that is active prior to asymmetric division when DNA is damaged. DisA forms globular foci that rapidly scan along the chromosomes during sporulation, searching for lesions. When a lesion is present, DisA pauses at the lesion site. This triggers a cellular response that culminates in a temporary block in sporulation initiation. Its function is as follows. Also has diadenylate cyclase activity, catalyzing the condensation of 2 ATP molecules into cyclic di-AMP (c-di-AMP). c-di-AMP acts as a signaling molecule that couples DNA integrity with progression of sporulation. The rise in c-di-AMP level generated by DisA while scanning the chromosome, operates as a positive signal that advances sporulation; upon encountering a lesion, the DisA focus arrests at the damaged site and halts c-di-AMP synthesis. The protein is DNA integrity scanning protein DisA of Bacillus cereus (strain AH187).